Consider the following 152-residue polypeptide: MVKGVAVLSSSEGVSGTIYFTQEGDGPTTVTGNVSGLKPGPHGFHVHALGDTTNGCLSTGPHFNPAGKEHGAPDDEVRHAGDLGNVTVGEDGTAAFTIVDKQIPLTGPHSIIGRAVVVHADPDDLGKGGHELSKTTGNTGGRVACGINGLQG.

Residues histidine 45, histidine 47, and histidine 62 each coordinate Cu cation. Cysteine 56 and cysteine 145 are disulfide-bonded. Zn(2+) contacts are provided by histidine 62, histidine 70, histidine 79, and aspartate 82. Residue histidine 119 participates in Cu cation binding.

This sequence belongs to the Cu-Zn superoxide dismutase family. In terms of assembly, homodimer. The cofactor is Cu cation. Zn(2+) is required as a cofactor.

It is found in the cytoplasm. It catalyses the reaction 2 superoxide + 2 H(+) = H2O2 + O2. In terms of biological role, destroys radicals which are normally produced within the cells and which are toxic to biological systems. In Paulownia kawakamii (Dragon tree), this protein is Superoxide dismutase [Cu-Zn] (SODCC).